We begin with the raw amino-acid sequence, 337 residues long: Serpentine receptor class delta-50 (337 aa).

7 helical membrane passes run 10–30 (VLILTIFYNAYFLLAISSQLL), 48–68 (IYLFNILGLQFISTFSAFVLQ), 107–127 (VLFHILQTSLIACATALIIAF), 147–167 (QLVISYCVPLVFLICEVLSPN), 202–222 (SSQTLMLMIGLYGTPFIALVF), 250–270 (GLTLQTLLPLICYCPGFTYYI), and 280–300 (LFVEFAVSPYGFVYTIFDPLL).

Belongs to the nematode receptor-like protein srd family.

It localises to the membrane. This is Serpentine receptor class delta-50 from Caenorhabditis elegans.